We begin with the raw amino-acid sequence, 1533 residues long: Glycogen debranching enzyme (1533 aa).

Serine 64 is modified (phosphoserine). Residues aspartate 527, histidine 530, and aspartate 628 contribute to the active site.

Belongs to the glycogen debranching enzyme family. In terms of assembly, monomer. Interacts with NHLRC1/malin. In terms of processing, ubiquitinated. In terms of tissue distribution, ubiquitous. Expressed in striated skeletal muscle, heart, liver, spleen, skin, spinal cord, lung, kidney and testicle.

The protein resides in the cytoplasm. It carries out the reaction Transfers a segment of a (1-&gt;4)-alpha-D-glucan to a new position in an acceptor, which may be glucose or a (1-&gt;4)-alpha-D-glucan.. The catalysed reaction is Hydrolysis of (1-&gt;6)-alpha-D-glucosidic branch linkages in glycogen phosphorylase limit dextrin.. In terms of biological role, multifunctional enzyme acting as 1,4-alpha-D-glucan:1,4-alpha-D-glucan 4-alpha-D-glycosyltransferase and amylo-1,6-glucosidase in glycogen degradation. The sequence is that of Glycogen debranching enzyme from Equus caballus (Horse).